A 249-amino-acid polypeptide reads, in one-letter code: NAD kinase (249 aa).

Catalysis depends on aspartate 45, which acts as the Proton acceptor. NAD(+) is bound by residues 45-46 (DG), arginine 50, 110-111 (NE), aspartate 138, and 149-154 (SGWGMS).

This sequence belongs to the NAD kinase family. The cofactor is a divalent metal cation.

It is found in the cytoplasm. It catalyses the reaction NAD(+) + ATP = ADP + NADP(+) + H(+). In terms of biological role, involved in the regulation of the intracellular balance of NAD and NADP, and is a key enzyme in the biosynthesis of NADP. Catalyzes specifically the phosphorylation on 2'-hydroxyl of the adenosine moiety of NAD to yield NADP. This chain is NAD kinase, found in Saccharolobus islandicus (strain Y.N.15.51 / Yellowstone #2) (Sulfolobus islandicus).